The primary structure comprises 559 residues: MREAFHKYRDIEIRAPRGTALNARSWLCEAPLRLLMNNLDPEVAENPKELVVYGGIGRAARNWECFDRIVECLKNLEEDETLLIQSGKPVGVFRTQRDAPRVLIANSNLVPHWATWEHFHELDARGLAMFGQMTAGSWIYIGSQGIVQGTFETFVEAGRQHYGGDLRGRWLLSAGLGGMGGAQPLAATLAGASALLVECQQSRIDFRLKTGYLDEQARDLDDALARIARYRGEGRAVSVGLCANAADILPELVRRGVRPDLVTDQTSAHDPLNGYLPRGWSWAEYRERAAREPAATVAAAKRSMAGHVRAMLAFHERGVPVFDYGNNIRQMARDEGVENAFDFPGFVPAYIRPLFCRGIGPFRWVALSGEAEDIYRTDARVKELIPDDPHLHRWLGMARERIRFQGLPARICWVGLGQRARLGLAFNEMVRRGELKAPVVIGRDHLDSGSVASPNRETEAMRDGSDAVSDWPLLNALLNTASGATWVSLHHGGGVGMGYSQHAGVAIVCDGTDEAAARIARVLHNDPASGVMRHADAGYPEAIACARERGLKLPMLGDA.

Residues 54-55 (GG), Gln-132, 178-180 (GMG), Glu-198, Arg-203, 244-245 (NA), 265-269 (QTSAH), 275-276 (YL), and Tyr-324 each bind NAD(+). Cys-412 is an active-site residue. An NAD(+)-binding site is contributed by Gly-494.

The protein belongs to the urocanase family. Requires NAD(+) as cofactor.

It is found in the cytoplasm. The enzyme catalyses 4-imidazolone-5-propanoate = trans-urocanate + H2O. It functions in the pathway amino-acid degradation; L-histidine degradation into L-glutamate; N-formimidoyl-L-glutamate from L-histidine: step 2/3. Functionally, catalyzes the conversion of urocanate to 4-imidazolone-5-propionate. The chain is Urocanate hydratase from Azotobacter vinelandii (strain DJ / ATCC BAA-1303).